We begin with the raw amino-acid sequence, 259 residues long: Type III pantothenate kinase (259 aa).

6–13 is an ATP binding site; sequence DIGNTNVV. 107–110 contacts substrate; that stretch reads GADR. The active-site Proton acceptor is D109. D129 lines the K(+) pocket. T132 lines the ATP pocket. Residue T184 participates in substrate binding.

Belongs to the type III pantothenate kinase family. As to quaternary structure, homodimer. Requires NH4(+) as cofactor. The cofactor is K(+).

It localises to the cytoplasm. The catalysed reaction is (R)-pantothenate + ATP = (R)-4'-phosphopantothenate + ADP + H(+). The protein operates within cofactor biosynthesis; coenzyme A biosynthesis; CoA from (R)-pantothenate: step 1/5. Its function is as follows. Catalyzes the phosphorylation of pantothenate (Pan), the first step in CoA biosynthesis. This Thermomicrobium roseum (strain ATCC 27502 / DSM 5159 / P-2) protein is Type III pantothenate kinase.